A 6874-amino-acid chain; its full sequence is Nesprin-2 (6874 aa).

An actin-binding region spans residues 1–286 (MAASPVLPTE…MTYVAQFLKY (286 aa)). The Cytoplasmic segment spans residues 1 to 6823 (MAASPVLPTE…RRSFLSRVIR (6823 aa)). Calponin-homology (CH) domains lie at 31 to 136 (DTQK…LHFH) and 183 to 288 (WSAK…KYSK). 4 Spectrin repeats span residues 299-380 (AKVR…HQVA), 381-474 (AWRA…RINN), 475-577 (VLGK…QYIH), and 578-680 (NTKA…IQDQ). The stretch at 299-6767 (AKVRDALVWL…PDASLTSFDE (6469 aa)) forms a coiled coil. The tract at residues 675 to 723 (VKIQDQPPGNSSGTSLSKESAMAAEPGGSRGEDVKAAEKQEVEDEESAG) is disordered. Residues 681–692 (PPGNSSGTSLSK) are compositionally biased toward polar residues. Positions 704–714 (RGEDVKAAEKQ) are enriched in basic and acidic residues. Spectrin repeat units follow at residues 727–834 (VNEE…KNLS), 835–928 (DEPL…LRHE), 929–1030 (ISLY…KCAS), 1120–1211 (TQRG…LLNT), 1262–1322 (DIRD…DALD), 1323–1409 (ALEG…QSKE), 1410–1514 (EGPP…ASVT), 1515–1626 (ESLE…KTEE), 1627–1728 (YGEN…AGGS), 1729–1820 (NSYA…TKKN), 1821–1928 (ALQD…AGEL), 1929–2026 (NNSF…EEED), 2027–2122 (KLPA…LANT), 2123–2233 (YLSH…SVQK), 2234–2350 (LEGH…LNSI), 2422–2503 (DERE…TLKK), 2504–2610 (TKER…KCFQ), 2611–2707 (QATE…EALE), 2708–2821 (PLNR…QLEL), 2822–2923 (KLEE…FLQN), 2924–3027 (NGSE…GKIK), 3028–3133 (QLDT…NMLL), 3134–3239 (ELQP…SLRA), 3240–3343 (DVLN…AQEA), 3344–3456 (EEER…QWGG), 3457–3563 (ELKR…TTRK), 3564–3669 (NKDL…SSEV), 3670–3767 (SKSS…ESRT), 3768–3870 (SQLN…QIME), 3871–3976 (ALPH…VTQE), and 3977–4074 (QNEL…KPSA). Residues 2338-2397 (SAKQETENGLNSILKSKSSTEKHVKFSLPVEEMPATSEVPKPTRESAAVGESGGARETNT) form a disordered region. A compositionally biased stretch (polar residues) spans 2344-2354 (ENGLNSILKSK). Disordered stretches follow at residues 4062–4152 (KQEQ…ATIV), 4171–4193 (APDS…TDEG), 4326–4348 (FSED…DQPA), and 4401–4429 (HQEN…DSTL). Residues 4081–4091 (VAERDASERKL) are compositionally biased toward basic and acidic residues. Ser4096 carries the post-translational modification Phosphoserine. Residues 4110-4122 (SSVKSEDGRRRTE) are compositionally biased toward basic and acidic residues. Residues 4218 to 4337 (RSRPRPADIL…EDQHPSTLKK (120 aa)) form a Spectrin 36 repeat. Basic and acidic residues predominate over residues 4326-4345 (FSEDQHPSTLKKPSEPHDVD). The segment covering 4409–4429 (RQSASSSKVPSPGNAASDSTL) has biased composition (polar residues). Spectrin repeat units lie at residues 4507 to 4626 (SMTE…RSYQ), 4627 to 4714 (NEVK…RARY), 4715 to 4823 (LELS…QSML), 4824 to 4929 (QKWE…QTLL), 4930 to 5037 (KHLL…QEKL), 5038 to 5150 (HQLQ…KIQH), 5151 to 5252 (LEQL…SQVH), 5253 to 5377 (QLRA…KAPH), 5378 to 5473 (NAHA…MLLA), 5474 to 5576 (KSNE…YSEL), 5577 to 5691 (QGNG…QWRF), 5692 to 5786 (FTTS…LSLG), 5787 to 5894 (EVIS…RVAI), 5895 to 6004 (RKQE…VKKL), 6005 to 6122 (KETF…EETW), 6123 to 6230 (RLWQ…LRYF), and 6231 to 6342 (TNQR…PGLD). The tract at residues 5435–5459 (NSTLSDQLPQPEERSTPGLHSGQRH) is disordered. Residue Ser5772 is modified to Phosphoserine. Residues 6336 to 6473 (SHTPGLDDEK…TEAPVPTDAS (138 aa)) form a disordered region. Residues 6341-6354 (LDDEKEASENETDI) show a composition bias toward acidic residues. A phosphoserine mark is found at Ser6348, Ser6371, Ser6400, Ser6417, Ser6418, Ser6419, and Ser6448. Positions 6355-6372 (EDPREIQADSWRKRRESE) are enriched in basic and acidic residues. Spectrin repeat units follow at residues 6450-6534 (SHSK…KLRL), 6535-6650 (KQTV…QCQD), and 6651-6767 (FHQL…SFDE). Residues 6790 to 6812 (EEEEEEEETDSRMPHLDSPGSSQ) form a disordered region. Residues 6815-6874 (RSFLSRVIRAALPLQLLLLLLLLLACLLPASEDDYSCTQANNFARSFYPMLRYTNGPPPT) enclose the KASH domain. Residues 6824-6844 (AALPLQLLLLLLLLLACLLPA) form a helical; Anchor for type IV membrane protein membrane-spanning segment. The Perinuclear space segment spans residues 6845–6874 (SEDDYSCTQANNFARSFYPMLRYTNGPPPT). The tract at residues 6861-6874 (FYPMLRYTNGPPPT) is sufficient for interaction with SUN2.

This sequence belongs to the nesprin family. Core component of LINC complexes which are composed of inner nuclear membrane SUN domain-containing proteins coupled to outer nuclear membrane KASH domain-containing nesprins. SUN and KASH domain-containing proteins seem to bind each other promiscuously; however, some LINC complex constituents are tissue- or cell type-specific. At least SUN1/2-containing core LINC complexes are proposed to be hexameric composed of three protomers of each KASH and SUN domain-containing protein. The SUN2:SYNE2/KASH2 complex is a heterohexamer; the homotrimeric cloverleave-like conformation of the SUN domain is a prerequisite for LINC complex formation in which three separate SYNE2/KASH2 peptides bind at the interface of adjacent SUN domains. Interacts with EMD, LMNA, MKS3 and F-actin via its N-terminal domain. Interacts with DCTN1 and DYNC1I1/2; suggesting the association with the dynein-dynactin motor complex. Associates with kinesin motor complexes. Interacts with TMEM67. Interacts (via KASH domain) with TMEM258. Interacts with BROX; this interaction promotes SYN2 ubiquitination and facilitates the relaxation of mechanical stress imposed by compressive actin fibers at the rupture site. The disulfid bond with SUN2 is required for stability of the SUN2:SYNE2/KASH2 LINC complex under tensile forces though not required for the interaction. In terms of tissue distribution, C-terminal isoforms are highly expressed in the brain, hert and skeletal muscle. Isoform 1 (Nesprin-2 Giant) is most prevalent in the brain, skin, kidney and skeletal muscle.

The protein localises to the nucleus outer membrane. The protein resides in the sarcoplasmic reticulum membrane. It is found in the cell membrane. Its subcellular location is the cytoplasm. It localises to the cytoskeleton. The protein localises to the mitochondrion. The protein resides in the nucleus. It is found in the nucleoplasm. Multi-isomeric modular protein which forms a linking network between organelles and the actin cytoskeleton to maintain the subcellular spatial organization. As a component of the LINC (LInker of Nucleoskeleton and Cytoskeleton) complex involved in the connection between the nuclear lamina and the cytoskeleton. The nucleocytoplasmic interactions established by the LINC complex play an important role in the transmission of mechanical forces across the nuclear envelope and in nuclear movement and positioning. Specifically, SYNE2 and SUN2 assemble in arrays of transmembrane actin-associated nuclear (TAN) lines which are bound to F-actin cables and couple the nucleus to retrograde actin flow during actin-dependent nuclear movement. May be involved in nucleus-centrosome attachment. During interkinetic nuclear migration (INM) at G2 phase and nuclear migration in neural progenitors its LINC complex association with SUN1/2 and probable association with cytoplasmic dynein-dynactin motor complexes functions to pull the nucleus toward the centrosome; SYNE1 and SYNE2 seem to act redundantly in cerebellum, midbrain, brain stem, and other brain regions except cerebral cortex and hippocampus. During INM at G1 phase mediates respective LINC complex association with kinesin to push the nucleus away from the centrosome. Involved in nuclear migration in retinal photoreceptor progenitors. Required for centrosome migration to the apical cell surface during early ciliogenesis. In Mus musculus (Mouse), this protein is Nesprin-2.